The chain runs to 556 residues: Urocanate hydratase (556 aa).

Residues 52-53 (GG), Gln130, 176-178 (GMG), Glu196, Arg201, 242-243 (NA), 263-267 (QTSAH), 273-274 (YL), and Tyr322 contribute to the NAD(+) site. Cys410 is a catalytic residue. Gly492 is a binding site for NAD(+).

The protein belongs to the urocanase family. NAD(+) serves as cofactor.

The protein localises to the cytoplasm. It carries out the reaction 4-imidazolone-5-propanoate = trans-urocanate + H2O. It functions in the pathway amino-acid degradation; L-histidine degradation into L-glutamate; N-formimidoyl-L-glutamate from L-histidine: step 2/3. In terms of biological role, catalyzes the conversion of urocanate to 4-imidazolone-5-propionate. The sequence is that of Urocanate hydratase from Shewanella piezotolerans (strain WP3 / JCM 13877).